The chain runs to 194 residues: Phosphoheptose isomerase (194 aa).

An SIS domain is found at 37-194; that stretch reads ISNSFKQGGK…LIEFEMAKQA (158 aa). 52–54 contacts substrate; that stretch reads NGG. Positions 61 and 65 each coordinate Zn(2+). Substrate is bound by residues glutamate 65, 93-94, 119-121, serine 124, and glutamine 172; these read ND and STS. Zn(2+) is bound by residues glutamine 172 and histidine 180.

The protein belongs to the SIS family. GmhA subfamily. Homotetramer. It depends on Zn(2+) as a cofactor.

Its subcellular location is the cytoplasm. It carries out the reaction 2 D-sedoheptulose 7-phosphate = D-glycero-alpha-D-manno-heptose 7-phosphate + D-glycero-beta-D-manno-heptose 7-phosphate. Its pathway is carbohydrate biosynthesis; D-glycero-D-manno-heptose 7-phosphate biosynthesis; D-glycero-alpha-D-manno-heptose 7-phosphate and D-glycero-beta-D-manno-heptose 7-phosphate from sedoheptulose 7-phosphate: step 1/1. In terms of biological role, catalyzes the isomerization of sedoheptulose 7-phosphate in D-glycero-D-manno-heptose 7-phosphate. The chain is Phosphoheptose isomerase from Actinobacillus pleuropneumoniae serotype 5b (strain L20).